A 143-amino-acid chain; its full sequence is Small ribosomal subunit protein uS12 (143 aa).

A compositionally biased stretch (basic residues) spans 1–20; the sequence is MGKPRGLRTARKLKNHRREQ. Residues 1 to 28 are disordered; that stretch reads MGKPRGLRTARKLKNHRREQRWHDKDYK. Pro62 carries the hydroxyproline modification.

This sequence belongs to the universal ribosomal protein uS12 family. In terms of assembly, component of the 40S small ribosomal subunit.

The protein resides in the cytoplasm. It is found in the cytosol. The protein localises to the rough endoplasmic reticulum. The chain is Small ribosomal subunit protein uS12 (RPS23) from Lumbricus rubellus (Humus earthworm).